Consider the following 123-residue polypeptide: MNKLFLFTLLVTLWSVKGFTYEEKKQAFCSLPKVYQIRLLDCLIDRGSENDKEVVNAVYKCMNEHSDVDGKADAMMKAVCNEEIFATNRNLILCMLVNPPKLEHSERTNDDDLEAVKYCLVNG.

The N-terminal stretch at 1–18 (MNKLFLFTLLVTLWSVKG) is a signal peptide.

Post-translationally, contains 3 disulfide bonds. As to expression, expressed by the venom gland.

Its subcellular location is the secreted. This Lychas mucronatus (Chinese swimming scorpion) protein is Venom protein 29.